Here is a 199-residue protein sequence, read N- to C-terminus: Pyridoxal 5'-phosphate synthase subunit PdxT (199 aa).

L-glutamine is bound at residue glycine 49–serine 51. The active-site Nucleophile is the cysteine 81. L-glutamine is bound by residues arginine 110 and isoleucine 139 to arginine 140. Residues histidine 175 and glutamate 177 each act as charge relay system in the active site.

It belongs to the glutaminase PdxT/SNO family. In terms of assembly, in the presence of PdxS, forms a dodecamer of heterodimers. Only shows activity in the heterodimer.

The catalysed reaction is aldehydo-D-ribose 5-phosphate + D-glyceraldehyde 3-phosphate + L-glutamine = pyridoxal 5'-phosphate + L-glutamate + phosphate + 3 H2O + H(+). The enzyme catalyses L-glutamine + H2O = L-glutamate + NH4(+). The protein operates within cofactor biosynthesis; pyridoxal 5'-phosphate biosynthesis. In terms of biological role, catalyzes the hydrolysis of glutamine to glutamate and ammonia as part of the biosynthesis of pyridoxal 5'-phosphate. The resulting ammonia molecule is channeled to the active site of PdxS. This is Pyridoxal 5'-phosphate synthase subunit PdxT from Frankia casuarinae (strain DSM 45818 / CECT 9043 / HFP020203 / CcI3).